A 417-amino-acid chain; its full sequence is Gamma-glutamyl phosphate reductase (417 aa).

It belongs to the gamma-glutamyl phosphate reductase family.

The protein resides in the cytoplasm. It carries out the reaction L-glutamate 5-semialdehyde + phosphate + NADP(+) = L-glutamyl 5-phosphate + NADPH + H(+). It functions in the pathway amino-acid biosynthesis; L-proline biosynthesis; L-glutamate 5-semialdehyde from L-glutamate: step 2/2. In terms of biological role, catalyzes the NADPH-dependent reduction of L-glutamate 5-phosphate into L-glutamate 5-semialdehyde and phosphate. The product spontaneously undergoes cyclization to form 1-pyrroline-5-carboxylate. The protein is Gamma-glutamyl phosphate reductase of Shigella boydii serotype 18 (strain CDC 3083-94 / BS512).